The primary structure comprises 261 residues: Ethanolamine ammonia-lyase small subunit (261 aa).

Adenosylcob(III)alamin is bound by residues valine 157, glutamate 178, and cysteine 207.

This sequence belongs to the EutC family. As to quaternary structure, the basic unit is a heterodimer which dimerizes to form tetramers. The heterotetramers trimerize; 6 large subunits form a core ring with 6 small subunits projecting outwards. It depends on adenosylcob(III)alamin as a cofactor.

The protein localises to the bacterial microcompartment. It catalyses the reaction ethanolamine = acetaldehyde + NH4(+). It functions in the pathway amine and polyamine degradation; ethanolamine degradation. Functionally, catalyzes the deamination of various vicinal amino-alcohols to oxo compounds. Allows this organism to utilize ethanolamine as the sole source of nitrogen and carbon in the presence of external vitamin B12. The chain is Ethanolamine ammonia-lyase small subunit from Rhodopseudomonas palustris (strain BisA53).